The following is a 442-amino-acid chain: Elongation factor 1-alpha (442 aa).

The 224-residue stretch at 5–228 folds into the tr-type G domain; the sequence is KTHINIVVIG…DSVTPPERPV (224 aa). The tract at residues 14 to 21 is G1; sequence GHVDSGKS. 14–21 is a binding site for GTP; that stretch reads GHVDSGKS. Residues 70-74 are G2; sequence GITID. The segment at 91–94 is G3; sequence DAPG. Residues 91-95 and 153-156 each bind GTP; these read DAPGH and NKMD. A G4 region spans residues 153-156; the sequence is NKMD. The interval 192 to 194 is G5; that stretch reads SGF.

Belongs to the TRAFAC class translation factor GTPase superfamily. Classic translation factor GTPase family. EF-Tu/EF-1A subfamily.

It is found in the cytoplasm. Functionally, this protein promotes the GTP-dependent binding of aminoacyl-tRNA to the A-site of ribosomes during protein biosynthesis. This is Elongation factor 1-alpha from Entamoeba histolytica (strain ATCC 30459 / HM-1:IMSS / ABRM).